The chain runs to 968 residues: RNA polymerase-associated protein RapA (968 aa).

Residues 164 to 334 (DVGRRHAPRV…FARLRLLDPN (171 aa)) enclose the Helicase ATP-binding domain. ATP is bound at residue 177-184 (DEVGLGKT). The DEAH box motif lies at 280 to 283 (DEAH). Residues 490-662 (RVEWLMGYLT…YLASPDETEG (173 aa)) form the Helicase C-terminal domain.

This sequence belongs to the SNF2/RAD54 helicase family. RapA subfamily. In terms of assembly, interacts with the RNAP. Has a higher affinity for the core RNAP than for the holoenzyme. Its ATPase activity is stimulated by binding to RNAP.

Transcription regulator that activates transcription by stimulating RNA polymerase (RNAP) recycling in case of stress conditions such as supercoiled DNA or high salt concentrations. Probably acts by releasing the RNAP, when it is trapped or immobilized on tightly supercoiled DNA. Does not activate transcription on linear DNA. Probably not involved in DNA repair. The sequence is that of RNA polymerase-associated protein RapA from Escherichia coli O127:H6 (strain E2348/69 / EPEC).